We begin with the raw amino-acid sequence, 885 residues long: High affinity cAMP-specific and IBMX-insensitive 3',5'-cyclic phosphodiesterase 8B (885 aa).

Disordered stretches follow at residues 18 to 41 and 72 to 95; these read RDSDESSSPRQTTSVSQGPAAPLP and TELGSGSSAGSAAPAATTSRGRRR. Positions 23 to 34 are enriched in polar residues; it reads SSSPRQTTSVSQ. Low complexity predominate over residues 75-90; that stretch reads GSGSSAGSAAPAATTS. One can recognise a PAS domain in the interval 267-338; the sequence is ACNSVFTALD…DTINTCIKKG (72 aa). The segment at 393 to 436 is disordered; sequence IHRDSGDNSQTEPHSFRYKNRRKESIDVKSISSRGSDAPSLQNR. Polar residues predominate over residues 422-436; the sequence is SISSRGSDAPSLQNR. S517 carries the post-translational modification Phosphoserine. One can recognise a PDEase domain in the interval 539-875; it reads TINDVPPCIS…KHWKTLDDLK (337 aa). H615 (proton donor) is an active-site residue. A divalent metal cation is bound by residues H619, H655, and D656. S754 carries the phosphoserine modification. D781 contacts a divalent metal cation.

The protein belongs to the cyclic nucleotide phosphodiesterase family. PDE8 subfamily. It depends on a divalent metal cation as a cofactor. Abundantly expressed in the thyroid. Also very weakly expressed in brain, spinal cord and placenta. In the thyroid isoform 1 predominates, and isoforms 2 and 6 are also highly expressed. In the placenta isoforms 1 and 2 are expressed equally. In the brain isoform 2 predominates.

The enzyme catalyses 3',5'-cyclic AMP + H2O = AMP + H(+). Its pathway is purine metabolism; 3',5'-cyclic AMP degradation; AMP from 3',5'-cyclic AMP: step 1/1. Its activity is regulated as follows. Inhibited by dipyridimole. Insensitive to selective PDE inhibitors including rolipram and milrinone as well as to the non-selective inhibitor, IBMX. Unaffected by cGMP. Its function is as follows. Hydrolyzes the second messenger cAMP, which is a key regulator of many important physiological processes. May be involved in specific signaling in the thyroid gland. The sequence is that of High affinity cAMP-specific and IBMX-insensitive 3',5'-cyclic phosphodiesterase 8B (PDE8B) from Homo sapiens (Human).